Here is a 269-residue protein sequence, read N- to C-terminus: Protein tsct-1 (269 aa).

This sequence belongs to the TSC-22/Dip/Bun family.

The protein is Protein tsct-1 of Caenorhabditis elegans.